Here is a 571-residue protein sequence, read N- to C-terminus: Alpha-1D adrenergic receptor (571 aa).

Topologically, residues 1-94 (MTFRDLLSVN…AVGGLVVSAQ (94 aa)) are extracellular. The segment at 13-75 (GSRSDGSAGG…SSAGEPGAAG (63 aa)) is disordered. Gly residues predominate over residues 19 to 34 (SAGGASAGGSGGGSGG). A compositionally biased stretch (low complexity) spans 35 to 47 (AAASEGRAVDGVP). Residues 48–57 (GTAGSGGVVG) show a composition bias toward gly residues. Residues Asn64 and Asn81 are each glycosylated (N-linked (GlcNAc...) asparagine). The helical transmembrane segment at 95–120 (GVGVGVFLAAFILMAVAGNLLVILSV) threads the bilayer. At 121 to 132 (ACNRHLQTVTNY) the chain is on the cytoplasmic side. The helical transmembrane segment at 133–158 (FIVNLAVADLLLSATVLPFSATMEVL) threads the bilayer. At 159 to 168 (GFWAFGRAFC) the chain is on the extracellular side. A helical transmembrane segment spans residues 169–191 (DVWAAVDVLCCTASILSLCTISV). Over 192 to 212 (DRYVGVRHSLKYPSIMTERKA) the chain is Cytoplasmic. The chain crosses the membrane as a helical span at residues 213–237 (AAILALLWAVAIVVSVGPLLGWKEP). At 238-250 (VPPDERFCGITEE) the chain is on the extracellular side. Residues 251-274 (AGYAVFSSLCSFYLPMAVIVVMYC) traverse the membrane as a helical segment. Over 275-348 (RVYVVARSTT…KFSREKKAAK (74 aa)) the chain is Cytoplasmic. A helical transmembrane segment spans residues 349–373 (TLAIVVGVFVLCWFPFFFVLPLGSL). Over 374 to 380 (FPQLKPS) the chain is Extracellular. Residues 381 to 405 (EGVFKVIFWLGYFNSCVNPLIYPCS) traverse the membrane as a helical segment. The Cytoplasmic segment spans residues 406–571 (SREFKRAFLR…DYSHLRETDI (166 aa)). Cys419 carries S-palmitoyl cysteine lipidation. Residues 465 to 487 (LPAPEATDTPSAPEAQAPVVGRR) are disordered.

This sequence belongs to the G-protein coupled receptor 1 family. Adrenergic receptor subfamily. ADRA1D sub-subfamily. As to quaternary structure, interacts with FLNA (via filamin repeat 21); increases PKA-mediated phosphorylation of FLNA. Post-translationally, palmitoylated. Palmitoylation by ZDHHC21 may increase the expression of the receptor and regulate downstream signaling.

Its subcellular location is the cell membrane. Its function is as follows. This alpha-adrenergic receptor mediates its effect through the influx of extracellular calcium. In Sus scrofa (Pig), this protein is Alpha-1D adrenergic receptor (ADRA1D).